The following is a 1008-amino-acid chain: Phytosulfokine receptor 1 (1008 aa).

An N-terminal signal peptide occupies residues 1-25 (MRVHRFCVIVIFLTELLCFFYSSES). 3 N-linked (GlcNAc...) asparagine glycosylation sites follow: Asn55, Asn64, and Asn73. 12 LRR repeats span residues 75–98 (TGRV…SLGK), 99–123 (LDEI…IFNL), 124–148 (KNLQ…NLPA), 150–170 (QSFD…ICHN), 172–194 (TQIR…GFGK), 195–219 (CVLL…LFHL), 221–243 (RLNL…IRNL), 244–266 (SSLV…VFDE), 291–315 (SPSL…CTAM), 316–339 (IALN…LPDC), 341–362 (RLKN…SFKN), and 363–387 (FESL…GILQ). Asn106 carries an N-linked (GlcNAc...) asparagine glycan. N-linked (GlcNAc...) asparagine glycosylation is found at Asn160, Asn170, and Asn187. Residue Asn242 is glycosylated (N-linked (GlcNAc...) asparagine). Arg300 contacts phytosulfokine. 2 N-linked (GlcNAc...) asparagine glycosylation sites follow: Asn301 and Asn311. Positions 346, 370, and 372 each coordinate phytosulfokine. N-linked (GlcNAc...) asparagine glycosylation is found at Asn373, Asn378, and Asn391. LRR repeat units lie at residues 392 to 414 (LTTL…SLHF), 415 to 438 (EKLK…LSSS), 439 to 464 (NELQ…DFKA), and 466 to 486 (FYLD…LTKL). 3 residues coordinate phytosulfokine: Thr398, Asn424, and Asp445. 2 N-linked (GlcNAc...) asparagine glycosylation sites follow: Asn472 and Asn493. Residue Lys508 participates in phytosulfokine binding. Residues Asn510 and Asn534 are each glycosylated (N-linked (GlcNAc...) asparagine). 4 LRR repeats span residues 521-545 (IFGF…EFGN), 546-570 (LKKL…LSGM), 571-594 (TSLE…LQQL), and 596-619 (FLSK…QFQT). N-linked (GlcNAc...) asparagine glycans are attached at residues Asn606 and Asn622. Residues 660–680 (MAIGIAFGSVFLLTLLSLIVL) form a helical membrane-spanning segment. Residue Thr731 is modified to Phosphothreonine. The Protein kinase domain occupies 734–1005 (FDQANIIGCG…PTTQQLVSWL (272 aa)). ATP-binding positions include 740–748 (IGCGGFGMV) and Lys762. Tyr807 and Tyr847 each carry phosphotyrosine. Asp860 (proton acceptor) is an active-site residue. Tyr902 is modified (phosphotyrosine).

The protein belongs to the protein kinase superfamily. Ser/Thr protein kinase family. As to quaternary structure, homo- and heterodimers with PSY1R. Heterodimers with the somatic embryogenesis receptor-like kinases (SERKs). PSK is not directly involved in PSKR-SERK interaction but stabilizes PSKR island domain for recruitment of a SERK. Part of a functional complex containing PSKR1, BAK1, CNGC17, and AHA. Interacts with AHA1, AHA2, and BAK1, but not with CNGC17 or BRI1. Mg(2+) serves as cofactor. The cofactor is Mn(2+). Weakly expressed in roots, leaves, stems and flowers. Expressed in the primary and lateral roots, including root primordia and root tips, but not in the hypocotyl.

The protein localises to the cell membrane. The enzyme catalyses L-seryl-[protein] + ATP = O-phospho-L-seryl-[protein] + ADP + H(+). It carries out the reaction L-threonyl-[protein] + ATP = O-phospho-L-threonyl-[protein] + ADP + H(+). It catalyses the reaction GTP = 3',5'-cyclic GMP + diphosphate. CGMP suppresses kinase activity. In terms of biological role, phytosulfokine receptor with both a serine/threonine-protein kinase activity and a guanylate cyclase activity. Regulates, in response to phytosulfokine binding, a signaling cascade involved in plant cell differentiation, organogenesis, somatic embryogenesis, cellular proliferation and plant growth. Involved in plant immunity, with antagonistic effects on bacterial and fungal resistances. Not involved in PSY perception. CNGC17 and AHAs form a functional cation-translocating unit that is activated by PSKR1/BAK1 and possibly other BAK1/RLK complexes. The protein is Phytosulfokine receptor 1 of Arabidopsis thaliana (Mouse-ear cress).